Here is a 95-residue protein sequence, read N- to C-terminus: Aspartyl/glutamyl-tRNA(Asn/Gln) amidotransferase subunit C (95 aa).

This sequence belongs to the GatC family. Heterotrimer of A, B and C subunits.

It carries out the reaction L-glutamyl-tRNA(Gln) + L-glutamine + ATP + H2O = L-glutaminyl-tRNA(Gln) + L-glutamate + ADP + phosphate + H(+). The catalysed reaction is L-aspartyl-tRNA(Asn) + L-glutamine + ATP + H2O = L-asparaginyl-tRNA(Asn) + L-glutamate + ADP + phosphate + 2 H(+). In terms of biological role, allows the formation of correctly charged Asn-tRNA(Asn) or Gln-tRNA(Gln) through the transamidation of misacylated Asp-tRNA(Asn) or Glu-tRNA(Gln) in organisms which lack either or both of asparaginyl-tRNA or glutaminyl-tRNA synthetases. The reaction takes place in the presence of glutamine and ATP through an activated phospho-Asp-tRNA(Asn) or phospho-Glu-tRNA(Gln). The sequence is that of Aspartyl/glutamyl-tRNA(Asn/Gln) amidotransferase subunit C from Alkalilimnicola ehrlichii (strain ATCC BAA-1101 / DSM 17681 / MLHE-1).